The chain runs to 214 residues: Adenylate kinase (214 aa).

ATP is bound at residue 10–15 (GAGKGT). The NMP stretch occupies residues 30–59 (STGDMLRAAVKAGTPLGLEAKKVMDAGQLV). Residues threonine 31, arginine 36, 57 to 59 (QLV), 85 to 88 (GFPR), and glutamine 92 contribute to the AMP site. Residues 122–159 (GRRVHPGSGRVYHVVFNPPKVEGKDDVTGEDLAIRPDD) form an LID region. Residues arginine 123 and 132-133 (VY) contribute to the ATP site. Residues arginine 156 and arginine 167 each contribute to the AMP site. Position 200 (glutamine 200) interacts with ATP.

The protein belongs to the adenylate kinase family. As to quaternary structure, monomer.

It is found in the cytoplasm. It carries out the reaction AMP + ATP = 2 ADP. It participates in purine metabolism; AMP biosynthesis via salvage pathway; AMP from ADP: step 1/1. Catalyzes the reversible transfer of the terminal phosphate group between ATP and AMP. Plays an important role in cellular energy homeostasis and in adenine nucleotide metabolism. This is Adenylate kinase from Shewanella putrefaciens (strain CN-32 / ATCC BAA-453).